Consider the following 173-residue polypeptide: NADH-ubiquinone oxidoreductase chain 6 (173 aa).

5 consecutive transmembrane segments (helical) span residues 1–21 (MAYIMLTLLIGMVLGVISVAS), 25–45 (PYFAALGLVLVAGVGCVVLMG), 53–73 (LVLFLIYLGGMLVVFAYCAAL), 87–107 (VLGSVLGYLLLVVGAGSWFWG), and 139–159 (LGGGLLVVSAWVLLLTLLVVL).

Belongs to the complex I subunit 6 family.

It is found in the mitochondrion membrane. It catalyses the reaction a ubiquinone + NADH + 5 H(+)(in) = a ubiquinol + NAD(+) + 4 H(+)(out). In terms of biological role, core subunit of the mitochondrial membrane respiratory chain NADH dehydrogenase (Complex I) that is believed to belong to the minimal assembly required for catalysis. Complex I functions in the transfer of electrons from NADH to the respiratory chain. The immediate electron acceptor for the enzyme is believed to be ubiquinone. The sequence is that of NADH-ubiquinone oxidoreductase chain 6 (MT-ND6) from Gadus morhua (Atlantic cod).